The sequence spans 539 residues: Diacylglycerol O-acyltransferase 1 (539 aa).

The disordered stretch occupies residues 1–104 (MAISDMPEST…NDGGEKIANG (104 aa)). The span at 33-52 (TETTEVSDSNSKTTDPDSGN) shows a compositional bias: polar residues. Over residues 56 to 80 (ESVRVRDSSTDESLARKSCEDDGSR) the composition is skewed to basic and acidic residues. A run of 7 helical transmembrane segments spans residues 143-163 (HAGL…RLII), 187-207 (WPLL…FVVE), 219-239 (VVLL…VFVI), 244-264 (SVVL…LKLV), 294-314 (YPYS…TLCY), 334-354 (VKLI…INPI), and 383-403 (VWLC…AELL). The FYXDWWN motif signature appears at 410 to 416 (FYKDWWN). 3 helical membrane-spanning segments follow: residues 451–471 (GVAI…CIAV), 473–493 (CHIF…LVLI), and 506–526 (VGNM…CVLL). Histidine 465 is an active-site residue.

Belongs to the membrane-bound acyltransferase family. Sterol o-acyltransferase subfamily.

The protein localises to the endoplasmic reticulum membrane. The catalysed reaction is an acyl-CoA + a 1,2-diacyl-sn-glycerol = a triacyl-sn-glycerol + CoA. It functions in the pathway glycerolipid metabolism; triacylglycerol biosynthesis. Major contributor to triacylglycerol (TAG) synthesis and oil accumulation in developing seeds. Catalyzes the acylation of the sn-3 hydroxy group of sn-1,2-diacylglycerol using acyl-CoA. Has a marked preference for oleoyl-CoA as substrate. This chain is Diacylglycerol O-acyltransferase 1, found in Corylus americana (American hazelnut).